Reading from the N-terminus, the 135-residue chain is MSTTPAAGVLDTSVFIATESGRQLDEALIPDRVATTVVTLAELRVGVLAAATTDIRAQRLATLESVADMETLPVDDDAARMWARLRIHLAESGRRVRINDLWIAAVAASRALPVITQDDDFAALDGAASVEIIRV.

One can recognise a PINc domain in the interval 9 to 130; the sequence is VLDTSVFIAT…FAALDGAASV (122 aa). Mg(2+) contacts are provided by D11 and D100.

Belongs to the PINc/VapC protein family. In terms of assembly, forms a complex with VapB5. Mg(2+) is required as a cofactor.

Its subcellular location is the secreted. In terms of biological role, probable toxic component of a type II toxin-antitoxin (TA) system. The cognate antitoxin is VapB5. Has limited RNase activity on substrates; activity is seen with a VapC5-VapB5 complex. The polypeptide is Ribonuclease VapC5 (Mycobacterium tuberculosis (strain ATCC 25618 / H37Rv)).